The chain runs to 267 residues: tRNA pseudouridine synthase A (267 aa).

Residue D53 is the Nucleophile of the active site. A substrate-binding site is contributed by Y111.

Belongs to the tRNA pseudouridine synthase TruA family. As to quaternary structure, homodimer.

It catalyses the reaction uridine(38/39/40) in tRNA = pseudouridine(38/39/40) in tRNA. In terms of biological role, formation of pseudouridine at positions 38, 39 and 40 in the anticodon stem and loop of transfer RNAs. The polypeptide is tRNA pseudouridine synthase A (Alcanivorax borkumensis (strain ATCC 700651 / DSM 11573 / NCIMB 13689 / SK2)).